Consider the following 334-residue polypeptide: tRNA N6-adenosine threonylcarbamoyltransferase (334 aa).

Fe cation-binding residues include H112 and H116. Substrate contacts are provided by residues 135 to 139 (VVSGG), D168, G181, D185, and N274. Residue D303 participates in Fe cation binding.

It belongs to the KAE1 / TsaD family. Fe(2+) is required as a cofactor.

It localises to the cytoplasm. The catalysed reaction is L-threonylcarbamoyladenylate + adenosine(37) in tRNA = N(6)-L-threonylcarbamoyladenosine(37) in tRNA + AMP + H(+). Functionally, required for the formation of a threonylcarbamoyl group on adenosine at position 37 (t(6)A37) in tRNAs that read codons beginning with adenine. Is involved in the transfer of the threonylcarbamoyl moiety of threonylcarbamoyl-AMP (TC-AMP) to the N6 group of A37, together with TsaE and TsaB. TsaD likely plays a direct catalytic role in this reaction. The polypeptide is tRNA N6-adenosine threonylcarbamoyltransferase (Anaeromyxobacter dehalogenans (strain 2CP-C)).